A 324-amino-acid polypeptide reads, in one-letter code: UDP-N-acetylenolpyruvoylglucosamine reductase (324 aa).

The region spanning 36 to 211 is the FAD-binding PCMH-type domain; that stretch reads FRAGGLAELM…AEDKAKIRND (176 aa). Residue R183 is part of the active site. S232 functions as the Proton donor in the catalytic mechanism. E302 is an active-site residue.

Belongs to the MurB family. FAD serves as cofactor.

It localises to the cytoplasm. It carries out the reaction UDP-N-acetyl-alpha-D-muramate + NADP(+) = UDP-N-acetyl-3-O-(1-carboxyvinyl)-alpha-D-glucosamine + NADPH + H(+). Its pathway is cell wall biogenesis; peptidoglycan biosynthesis. Its function is as follows. Cell wall formation. The chain is UDP-N-acetylenolpyruvoylglucosamine reductase from Sinorhizobium medicae (strain WSM419) (Ensifer medicae).